The following is a 208-amino-acid chain: MLYQMHKCKDTYKYKGAQCYIINRENAGPGHSHQSRFVFVKNNEIIAVANYMLVTNDVNPVLFTYDNLMDLAYDYNWFNHDNLVHIEGVGFDISYSSYSLCPMSRAHKEPEYFSFRRRVDFKRSTEYVGGIFVKDNRITRIIYPLGFGQKDIDVDLDFTENIINHIASVYFDIDHKIVICGYELPSEKQPKVNVSIDDQIFNAFMNRG.

Belongs to the Anti-DarT factor A family.

In terms of biological role, plays a role in counteracting the host DarT defense system. This chain is Anti-DarT factor A (adfA), found in Enterobacteria phage T4 (Bacteriophage T4).